Reading from the N-terminus, the 254-residue chain is 3-deoxy-manno-octulosonate cytidylyltransferase (254 aa).

Belongs to the KdsB family.

Its subcellular location is the cytoplasm. The enzyme catalyses 3-deoxy-alpha-D-manno-oct-2-ulosonate + CTP = CMP-3-deoxy-beta-D-manno-octulosonate + diphosphate. It functions in the pathway nucleotide-sugar biosynthesis; CMP-3-deoxy-D-manno-octulosonate biosynthesis; CMP-3-deoxy-D-manno-octulosonate from 3-deoxy-D-manno-octulosonate and CTP: step 1/1. The protein operates within bacterial outer membrane biogenesis; lipopolysaccharide biosynthesis. Its function is as follows. Activates KDO (a required 8-carbon sugar) for incorporation into bacterial lipopolysaccharide in Gram-negative bacteria. In Chlamydia caviae (strain ATCC VR-813 / DSM 19441 / 03DC25 / GPIC) (Chlamydophila caviae), this protein is 3-deoxy-manno-octulosonate cytidylyltransferase.